The chain runs to 230 residues: Uracil-DNA glycosylase (230 aa).

Aspartate 70 (proton acceptor) is an active-site residue.

This sequence belongs to the uracil-DNA glycosylase (UDG) superfamily. UNG family.

The protein localises to the cytoplasm. The enzyme catalyses Hydrolyzes single-stranded DNA or mismatched double-stranded DNA and polynucleotides, releasing free uracil.. Functionally, excises uracil residues from the DNA which can arise as a result of misincorporation of dUMP residues by DNA polymerase or due to deamination of cytosine. In Pseudomonas putida (strain ATCC 700007 / DSM 6899 / JCM 31910 / BCRC 17059 / LMG 24140 / F1), this protein is Uracil-DNA glycosylase.